We begin with the raw amino-acid sequence, 456 residues long: Equilibrative nucleoside transporter 2 (456 aa).

The chain crosses the membrane as a helical span at residues 13–33; that stretch reads LVGISFFILGLGTLLPWNFFI. N-linked (GlcNAc...) asparagine glycans are attached at residues asparagine 48 and asparagine 57. The next 5 membrane-spanning stretches (helical) occupy residues 70–90, 99–119, 124–144, 162–182, and 193–213; these read WVTL…SFLY, ILGS…LVKV, GPFF…SAVL, LFLS…LLSM, and LGYF…YLSL. N-linked (GlcNAc...) asparagine glycosylation is present at asparagine 225. Serine 252 carries the phosphoserine modification. 5 consecutive transmembrane segments (helical) span residues 291 to 311, 324 to 344, 360 to 380, 386 to 406, and 432 to 452; these read WLTA…FPAI, WSQF…DWLG, LLPL…LCHV, LPIL…FAVS, and ALMT…SFLF.

Belongs to the SLC29A/ENT transporter (TC 2.A.57) family. Post-translationally, glycosylated. Highly expressed in skeletal muscle. Expressed in liver, lung, placenta, brain, heart, kidney and ovarian tissues. Expressed in testis at the blood-brain-barrier.

Its subcellular location is the apical cell membrane. It localises to the basolateral cell membrane. It carries out the reaction inosine(in) = inosine(out). It catalyses the reaction adenosine(in) = adenosine(out). The enzyme catalyses uridine(out) = uridine(in). The catalysed reaction is thymidine(in) = thymidine(out). It carries out the reaction hypoxanthine(out) = hypoxanthine(in). It catalyses the reaction adenine(out) = adenine(in). The enzyme catalyses cytidine(in) = cytidine(out). The catalysed reaction is thymine(out) = thymine(in). It carries out the reaction uracil(in) = uracil(out). It catalyses the reaction guanine(out) = guanine(in). The enzyme catalyses guanosine(in) = guanosine(out). Bidirectional uniporter involved in the facilitative transport of nucleosides and nucleobases, and contributes to maintaining their cellular homeostasis. Functions as a Na(+)-independent, passive transporter. Involved in the transport of nucleosides such as inosine, adenosine, uridine, thymidine, cytidine and guanosine. Also able to transport purine nucleobases (hypoxanthine, adenine, guanine) and pyrimidine nucleobases (thymine, uracil). Involved in nucleoside transport at basolateral membrane of kidney cells, allowing liver absorption of nucleoside metabolites. Mediates apical nucleoside uptake into Sertoli cells, thereby regulating the transport of nucleosides in testis across the blood-testis-barrier. Mediates both the influx and efflux of hypoxanthine in skeletal muscle microvascular endothelial cells to control the amount of intracellular hypoxanthine available for xanthine oxidase-mediated ROS production. In terms of biological role, non functional nucleoside transporter protein for adenosine or thymidine transport. Does not express on cell membrane. This is Equilibrative nucleoside transporter 2 from Homo sapiens (Human).